A 453-amino-acid polypeptide reads, in one-letter code: Phosphoglucosamine mutase (453 aa).

Residue Ser-105 is the Phosphoserine intermediate of the active site. Residues Ser-105, Asp-244, Asp-246, and Asp-248 each contribute to the Mg(2+) site. Ser-105 is modified (phosphoserine).

This sequence belongs to the phosphohexose mutase family. Mg(2+) is required as a cofactor. Activated by phosphorylation.

It catalyses the reaction alpha-D-glucosamine 1-phosphate = D-glucosamine 6-phosphate. Catalyzes the conversion of glucosamine-6-phosphate to glucosamine-1-phosphate. This Blochmanniella pennsylvanica (strain BPEN) protein is Phosphoglucosamine mutase.